The chain runs to 610 residues: Autophagy-related protein 22-1 (610 aa).

The disordered stretch occupies residues 1–29; that stretch reads MIFTSTPPAPPPADAQQRQPRYPGEDTTP. A helical membrane pass occupies residues 41–61; the sequence is YGIAAEVFAVCGVGSFLPLTL. Residue Asn-90 is glycosylated (N-linked (GlcNAc...) asparagine). The next 3 helical transmembrane spans lie at 120–140, 153–173, and 177–197; these read SFAM…LISF, LLLT…FISP, and ILGA…FVVL. A disordered region spans residues 216-242; the sequence is KTEGEELPHLDSSGEYTRSGSFNRGDN. Positions 229–239 are enriched in polar residues; it reads GEYTRSGSFNR. 4 consecutive transmembrane segments (helical) span residues 277–297, 310–330, 379–399, and 415–435; these read GVGL…LLLF, TLPL…FTVV, VVIF…VSGT, and VGLL…LWPV. Asn-445 carries N-linked (GlcNAc...) asparagine glycosylation. 4 consecutive transmembrane segments (helical) span residues 450–470, 485–507, 527–547, and 550–570; these read LCIA…IPLV, FPLG…SFFG, KGSS…TGQV, and GFFF…MVNA. Residues 586-610 are disordered; sequence KSHGENSSEFGHPSEEAEGLLARNP. Asn-591 carries N-linked (GlcNAc...) asparagine glycosylation.

It belongs to the ATG22 family.

It localises to the vacuole membrane. Functionally, vacuolar effluxer which mediate the efflux of amino acids resulting from autophagic degradation. The release of autophagic amino acids allows the maintenance of protein synthesis and viability during nitrogen starvation. In Aspergillus clavatus (strain ATCC 1007 / CBS 513.65 / DSM 816 / NCTC 3887 / NRRL 1 / QM 1276 / 107), this protein is Autophagy-related protein 22-1 (atg22-1).